A 268-amino-acid chain; its full sequence is Cell division cycle-associated protein 3 (268 aa).

2 disordered regions span residues 1 to 232 and 247 to 268; these read MGSA…SELK and GRAWEQGQDHDKENQHFPLVES. 2 positions are modified to phosphoserine: serine 29 and serine 31. Threonine 37 carries the phosphothreonine modification. Phosphoserine occurs at positions 44, 64, and 68. Over residues 56–66 the composition is skewed to basic and acidic residues; sequence EGLKHAQDSDP. At threonine 76 the chain carries Phosphothreonine. Phosphoserine occurs at positions 87 and 94. The interval 91-120 is F-box-like; sequence KQLSEVFETEDSKSNLPPEPVLPPEAPLSS. Positions 107 to 116 are enriched in pro residues; the sequence is PPEPVLPPEA. Positions 117–126 are enriched in low complexity; sequence PLSSELDLPL. Polar residues-rich tracts occupy residues 128–149, 158–169, and 178–194; these read TQLSVEEQMPPWNQTEFPSKQV, PTETPVASQSSD, and PRSSGSMRNRWKPNSSK. Serine 199 is subject to Phosphoserine. Threonine 202 carries the post-translational modification Phosphothreonine. Residues 205-215 are compositionally biased toward polar residues; that stretch reads QDDNSPGTLTL. At serine 209 the chain carries Phosphoserine. Position 212 is a phosphothreonine (threonine 212). A KEN box motif is present at residues 258–260; that stretch reads KEN.

As to quaternary structure, interacts with SKP1. Part of a SCF (SKP1-cullin-F-box) protein ligase complex. In terms of processing, ubiquitinated and degraded by the APC/C-Cdh1 complex.

It is found in the cytoplasm. Its subcellular location is the cytosol. It functions in the pathway protein modification; protein ubiquitination. Its function is as follows. F-box-like protein which is required for entry into mitosis. Acts by participating in E3 ligase complexes that mediate the ubiquitination and degradation of WEE1 kinase at G2/M phase. This Homo sapiens (Human) protein is Cell division cycle-associated protein 3 (CDCA3).